The chain runs to 379 residues: F-box protein At5g18160 (379 aa).

The segment at 1-26 is disordered; it reads MDKQDEKKQGTTKSSSTLTTRCSHGN. Residues 11 to 26 are compositionally biased toward polar residues; it reads TTKSSSTLTTRCSHGN. In terms of domain architecture, F-box spans 28-74; the sequence is ISQSNSIPLDITIEILSRLPAKSIVRSRSVSKLWSSITTTPEFIKHR.

The protein is F-box protein At5g18160 of Arabidopsis thaliana (Mouse-ear cress).